We begin with the raw amino-acid sequence, 448 residues long: MIDSTAVAAGHAKQPFYKHLYFQVLVAIIAGIALGHFYPTFGEQLKPLGDGFIRLVKMIIAPVIFLTVATGIAGMNDMKKVGRVAGKAMIYFLVFSTLALIVGLIVANTVQPGAGMNIDPATLDAKAVATYADKAHEQTITGFLMNIIPTTIVGAFASGDILQVLFFSVLFGIALGIVGEKGKPVTDFMHAMMYPIFKLVAILMKAAPIGAFGAMAFTIGKYGISSVTNLAMLIGTFYITSALFVFVVLGAVCRYNGFSIVALIRYIKEELLLVLGTSSSEAALPGLMSKMEKAGCKRSVVGLVIPTGYSFNLDGTNIYMTLAALFIAQATGIHLSFGEQILLLLVAMLSSKGAAGITGAGFITLAATLSVVPSVPVAGMALILGIDRFMSECRALTNFVGNAVATIVVARWEGELDQEQLARVLSGKEEFTSIADVDALPASVQPAE.

The next 8 membrane-spanning stretches (helical) occupy residues Leu20–Tyr38, Ile53–Met75, Ala88–Val110, Ile161–Val178, Leu199–Gly220, Leu230–Val252, Leu325–Ala347, and Phe362–Leu384.

This sequence belongs to the dicarboxylate/amino acid:cation symporter (DAACS) (TC 2.A.23) family.

The protein resides in the cell inner membrane. Functionally, responsible for the transport of dicarboxylates such as succinate, fumarate, and malate from the periplasm across the membrane. This is C4-dicarboxylate transport protein from Agrobacterium fabrum (strain C58 / ATCC 33970) (Agrobacterium tumefaciens (strain C58)).